We begin with the raw amino-acid sequence, 491 residues long: mRNA cleavage and polyadenylation factor clp1 (491 aa).

Glu-28 and Lys-78 together coordinate ATP. The segment at 128–160 is disordered; sequence RAAAAQAQQQHPTHHQQQQQGRGAGAGVARSKP. The span at 130 to 148 shows a compositional bias: low complexity; it reads AAAQAQQQHPTHHQQQQQG. Residue 171–176 participates in ATP binding; it reads GVGKTS.

Belongs to the Clp1 family. Clp1 subfamily. Component of a pre-mRNA cleavage factor complex. Interacts directly with PCF11.

The protein localises to the nucleus. In terms of biological role, required for endonucleolytic cleavage during polyadenylation-dependent pre-mRNA 3'-end formation. The sequence is that of mRNA cleavage and polyadenylation factor clp1 (paa-7) from Neurospora crassa (strain ATCC 24698 / 74-OR23-1A / CBS 708.71 / DSM 1257 / FGSC 987).